The primary structure comprises 242 residues: Orotidine 5'-phosphate decarboxylase (242 aa).

Residues D16, K37, 64–73 (DLKFHDIPNT), T128, R190, Q199, G219, and R220 contribute to the substrate site. The Proton donor role is filled by K66.

It belongs to the OMP decarboxylase family. Type 1 subfamily. In terms of assembly, homodimer.

The enzyme catalyses orotidine 5'-phosphate + H(+) = UMP + CO2. It functions in the pathway pyrimidine metabolism; UMP biosynthesis via de novo pathway; UMP from orotate: step 2/2. Catalyzes the decarboxylation of orotidine 5'-monophosphate (OMP) to uridine 5'-monophosphate (UMP). The protein is Orotidine 5'-phosphate decarboxylase of Prochlorococcus marinus (strain MIT 9215).